Consider the following 90-residue polypeptide: Small ribosomal subunit protein uS15 (90 aa).

Belongs to the universal ribosomal protein uS15 family. As to quaternary structure, part of the 30S ribosomal subunit. Forms a bridge to the 50S subunit in the 70S ribosome, contacting the 23S rRNA.

Its function is as follows. One of the primary rRNA binding proteins, it binds directly to 16S rRNA where it helps nucleate assembly of the platform of the 30S subunit by binding and bridging several RNA helices of the 16S rRNA. In terms of biological role, forms an intersubunit bridge (bridge B4) with the 23S rRNA of the 50S subunit in the ribosome. In Helicobacter pylori (strain P12), this protein is Small ribosomal subunit protein uS15.